The primary structure comprises 407 residues: MHTSPMEQPGTGDAGGLNVYVVELSRQLAALGVEVEVFTRAVSSKLPTSAELAPGVTVRHVDAGPFEEIHREDLPAWLCAFTADVLRAEAGHEPGYFDVIHSHYWLSGQVALAVARRWGVPFVHTSHTLAKIKNGALAVGDRPEPPGRLLGEQEVIAGSTRLIASTADERGHLIDLYDADPDRVDVVAPGVDLETFRPGDPAQSRARLGLDRDGDLLLFVGRIQPLKAPDLLLHAAAELLRRDPTRRSRLTVAVVGGPSGSGLEQPDALVKLAADLGISDLVRFQPPAPQHELAHWYRAATAVVVPSHSESFGLVALEAQACGTPVVAAAVGGLRTAVADGVSGLLVAGRDPARYADTLDRLLRQPHWRSRLAAGAVGRAAGFGWSATARGVLRSYRHALSPAAVAV.

His2 lines the 1D-myo-inositol 3-phosphate pocket. Residues 8–9 (QP) and Gly16 contribute to the UDP-N-acetyl-alpha-D-glucosamine site. Residues 13–18 (DAGGLN), Arg71, Tyr104, Thr128, and Arg148 contribute to the 1D-myo-inositol 3-phosphate site. 2 residues coordinate UDP-N-acetyl-alpha-D-glucosamine: Arg222 and Lys227. The Mg(2+) site is built by Tyr297, Arg298, and Ala300. 2 residues coordinate UDP-N-acetyl-alpha-D-glucosamine: Glu310 and Glu318. A Mg(2+)-binding site is contributed by Thr324.

Belongs to the glycosyltransferase group 1 family. MshA subfamily. As to quaternary structure, homodimer.

It catalyses the reaction 1D-myo-inositol 3-phosphate + UDP-N-acetyl-alpha-D-glucosamine = 1D-myo-inositol 2-acetamido-2-deoxy-alpha-D-glucopyranoside 3-phosphate + UDP + H(+). Functionally, catalyzes the transfer of a N-acetyl-glucosamine moiety to 1D-myo-inositol 3-phosphate to produce 1D-myo-inositol 2-acetamido-2-deoxy-glucopyranoside 3-phosphate in the mycothiol biosynthesis pathway. This Frankia alni (strain DSM 45986 / CECT 9034 / ACN14a) protein is D-inositol 3-phosphate glycosyltransferase.